Here is a 188-residue protein sequence, read N- to C-terminus: Putative pre-16S rRNA nuclease (188 aa).

Residues 144 to 188 (HAPGRVVAGPKGRRKARHRGQGGTGTEQQADAGGRARPHATEGKG) form a disordered region. Residues 154–163 (KGRRKARHRG) show a composition bias toward basic residues.

The protein belongs to the YqgF nuclease family.

Its subcellular location is the cytoplasm. In terms of biological role, could be a nuclease involved in processing of the 5'-end of pre-16S rRNA. This chain is Putative pre-16S rRNA nuclease, found in Kineococcus radiotolerans (strain ATCC BAA-149 / DSM 14245 / SRS30216).